We begin with the raw amino-acid sequence, 126 residues long: UPF0538 protein C2orf76 homolog (126 aa).

The protein belongs to the UPF0538 family.

In Bos taurus (Bovine), this protein is UPF0538 protein C2orf76 homolog.